A 135-amino-acid polypeptide reads, in one-letter code: Putative pre-16S rRNA nuclease (135 aa).

This sequence belongs to the YqgF nuclease family.

Its subcellular location is the cytoplasm. Its function is as follows. Could be a nuclease involved in processing of the 5'-end of pre-16S rRNA. This chain is Putative pre-16S rRNA nuclease, found in Buchnera aphidicola subsp. Acyrthosiphon pisum (strain 5A).